Consider the following 290-residue polypeptide: Ribosomal RNA small subunit methyltransferase A (290 aa).

6 residues coordinate S-adenosyl-L-methionine: N27, L29, G54, E75, D100, and N125.

The protein belongs to the class I-like SAM-binding methyltransferase superfamily. rRNA adenine N(6)-methyltransferase family. RsmA subfamily.

The protein localises to the cytoplasm. It catalyses the reaction adenosine(1518)/adenosine(1519) in 16S rRNA + 4 S-adenosyl-L-methionine = N(6)-dimethyladenosine(1518)/N(6)-dimethyladenosine(1519) in 16S rRNA + 4 S-adenosyl-L-homocysteine + 4 H(+). In terms of biological role, specifically dimethylates two adjacent adenosines (A1518 and A1519) in the loop of a conserved hairpin near the 3'-end of 16S rRNA in the 30S particle. May play a critical role in biogenesis of 30S subunits. This chain is Ribosomal RNA small subunit methyltransferase A, found in Streptococcus equi subsp. zooepidemicus (strain H70).